The following is a 47-amino-acid chain: Fasciclin-like arabinogalactan protein (47 aa).

The 47-residue stretch at 1-47 (APTPATLNGLTIFAPNDEAFKATGVPDLSKLSNAPMVSLLQYHAAAR) folds into the FAS1 domain.

The protein belongs to the fasciclin-like AGP family.

May be a cell surface adhesion protein. In Jatropha curcas (Barbados nut), this protein is Fasciclin-like arabinogalactan protein.